A 284-amino-acid chain; its full sequence is D-tagatose-1,6-bisphosphate aldolase subunit GatY (284 aa).

Aspartate 82 acts as the Proton donor in catalysis. Positions 83 and 180 each coordinate Zn(2+). A dihydroxyacetone phosphate-binding site is contributed by glycine 181. Histidine 208 is a binding site for Zn(2+). Dihydroxyacetone phosphate-binding positions include 209–211 and 230–233; these read GAS and NVAT.

This sequence belongs to the class II fructose-bisphosphate aldolase family. TagBP aldolase GatY subfamily. Forms a complex with GatZ. Zn(2+) serves as cofactor.

It carries out the reaction D-tagatofuranose 1,6-bisphosphate = D-glyceraldehyde 3-phosphate + dihydroxyacetone phosphate. It functions in the pathway carbohydrate metabolism; D-tagatose 6-phosphate degradation; D-glyceraldehyde 3-phosphate and glycerone phosphate from D-tagatose 6-phosphate: step 2/2. Its function is as follows. Catalytic subunit of the tagatose-1,6-bisphosphate aldolase GatYZ, which catalyzes the reversible aldol condensation of dihydroxyacetone phosphate (DHAP or glycerone-phosphate) with glyceraldehyde 3-phosphate (G3P) to produce tagatose 1,6-bisphosphate (TBP). Requires GatZ subunit for full activity and stability. Is involved in the catabolism of galactitol. This Salmonella typhi protein is D-tagatose-1,6-bisphosphate aldolase subunit GatY.